We begin with the raw amino-acid sequence, 113 residues long: Carrot ABA-induced in somatic embryos 3 (113 aa).

Basic and acidic residues-rich tracts occupy residues 1 to 17 (MASG…RAKQ), 32 to 52 (EAQE…KEQL), and 65 to 77 (GETR…KEGY). Residues 1 to 113 (MASGQEKRSE…IDQSKFRTKS (113 aa)) are disordered.

The protein belongs to the small hydrophilic plant seed protein family. As to expression, expressed in embryogenic cells, somatic embryos and seeds at the later stages of development. Not detected in leaves.

The sequence is that of Carrot ABA-induced in somatic embryos 3 from Daucus carota (Wild carrot).